We begin with the raw amino-acid sequence, 1010 residues long: Retinoblastoma-related protein 1 (1010 aa).

Residues 1–23 (MEGAAPPASSGSEVTGAGSGKVD) are disordered. The interval 419–619 (TPVSTAMTTA…EKGSSMYNSL (201 aa)) is domain A. Residues 419-861 (TPVSTAMTTA…NEVFIPTVKP (443 aa)) form a pocket region. A spacer region spans residues 620–730 (IVARPTLSAE…PAAGGELCAE (111 aa)). Residues 657-679 (LPPLPFQKQEHSPDKDEVRSPKR) are disordered. Residues 664 to 679 (KQEHSPDKDEVRSPKR) are compositionally biased toward basic and acidic residues. The domain B stretch occupies residues 731–861 (TGIGVFLSKI…NEVFIPTVKP (131 aa)). The tract at residues 868–898 (SGTSPNKKNEEKCAADGPYPESPRLSRFPNL) is disordered.

The protein belongs to the retinoblastoma protein (RB) family.

The protein localises to the nucleus. In terms of biological role, regulator of biological processes that recruits a histone deacetylase to control gene transcription. May play a role in the entry into mitosis, negatively regulating the cell proliferation. Formation of stable complexes with geminiviridae replication-associated proteins may create a cellular environment which favors viral DNA replication. This chain is Retinoblastoma-related protein 1 (RBR1), found in Oryza sativa subsp. japonica (Rice).